Reading from the N-terminus, the 590-residue chain is G protein-coupled receptor kinase 5 (590 aa).

The interval Met1–Thr185 is N-terminal. The interaction with calmodulin stretch occupies residues Gly20 to Ile39. The region spanning Tyr53–Leu171 is the RGS domain. Positions Phe186–Phe448 constitute a Protein kinase domain. ATP contacts are provided by residues Leu192–Val200 and Lys215. Asp311 (proton acceptor) is an active-site residue. Positions Arg388–Glu395 match the Nuclear localization signal motif. One can recognise an AGC-kinase C-terminal domain in the interval Arg449–Glu514. Ser484 bears the Phosphoserine; by autocatalysis mark. Thr485 is modified (phosphothreonine; by autocatalysis). Residues Pro546–Ser565 are sufficient for membrane localization. The disordered stretch occupies residues Leu554–Ser590. The span at Asn561–Ser590 shows a compositional bias: low complexity. A Phosphoserine modification is found at Ser579.

This sequence belongs to the protein kinase superfamily. AGC Ser/Thr protein kinase family. GPRK subfamily. Interacts with ST13 (via the C-terminus 303-319 AA). Interacts with TP53/p53. Interacts with HTR4 (via C-terminus 330-346 AA); this interaction is promoted by 5-HT (serotonin). Interacts with HDAC5. Interacts with GIT1. In terms of processing, autophosphorylated. Autophosphorylation may play a critical role in the regulation of GRK5 kinase activity. In terms of tissue distribution, highest levels in lung, heart, retina, lingual epithelium. Very little in brain, liver, kidney.

Its subcellular location is the cytoplasm. It is found in the nucleus. The protein resides in the cell membrane. It catalyses the reaction [G-protein-coupled receptor] + ATP = [G-protein-coupled receptor]-phosphate + ADP + H(+). With respect to regulation, inhibited by calmodulin with an IC(50) of 50 nM. Calmodulin inhibits GRK5 association with receptor and phospholipid. Functionally, serine/threonine kinase that phosphorylates preferentially the activated forms of a variety of G-protein-coupled receptors (GPCRs). Such receptor phosphorylation initiates beta-arrestin-mediated receptor desensitization, internalization, and signaling events leading to their down-regulation. Phosphorylates a variety of GPCRs, including adrenergic receptors (Beta-2 adrenergic receptor), muscarinic acetylcholine receptors (more specifically Gi-coupled M2/M4 subtypes), dopamine receptors and opioid receptors. In addition to GPCRs, also phosphorylates various substrates: Hsc70-interacting protein/ST13, TP53/p53, HDAC5, and arrestin-1/ARRB1. Phosphorylation of ARRB1 by GRK5 inhibits G-protein independent MAPK1/MAPK3 signaling downstream of 5HT4-receptors. Phosphorylation of HDAC5, a repressor of myocyte enhancer factor 2 (MEF2) leading to nuclear export of HDAC5 and allowing MEF2-mediated transcription. Phosphorylation of TP53/p53, a crucial tumor suppressor, inhibits TP53/p53-mediated apoptosis. Phosphorylation of ST13 regulates internalization of the chemokine receptor. Phosphorylates rhodopsin (RHO) (in vitro) and a non G-protein-coupled receptor, LRP6 during Wnt signaling (in vitro). The sequence is that of G protein-coupled receptor kinase 5 (GRK5) from Bos taurus (Bovine).